Consider the following 155-residue polypeptide: Xanthine-guanine phosphoribosyltransferase 2 (155 aa).

5-phospho-alpha-D-ribose 1-diphosphate is bound by residues 37–38 (RG) and 91–99 (DDLVDTGNT). Asp-92 lines the Mg(2+) pocket. The guanine site is built by Asp-95 and Ile-138. Positions 95 and 138 each coordinate xanthine. GMP is bound by residues 95 to 99 (DTGNT) and 137 to 138 (WI).

It belongs to the purine/pyrimidine phosphoribosyltransferase family. XGPT subfamily. Homotetramer. Mg(2+) serves as cofactor.

It localises to the cell inner membrane. It catalyses the reaction GMP + diphosphate = guanine + 5-phospho-alpha-D-ribose 1-diphosphate. It carries out the reaction XMP + diphosphate = xanthine + 5-phospho-alpha-D-ribose 1-diphosphate. The catalysed reaction is IMP + diphosphate = hypoxanthine + 5-phospho-alpha-D-ribose 1-diphosphate. It functions in the pathway purine metabolism; GMP biosynthesis via salvage pathway; GMP from guanine: step 1/1. The protein operates within purine metabolism; XMP biosynthesis via salvage pathway; XMP from xanthine: step 1/1. Functionally, purine salvage pathway enzyme that catalyzes the transfer of the ribosyl-5-phosphate group from 5-phospho-alpha-D-ribose 1-diphosphate (PRPP) to the N9 position of the 6-oxopurines guanine and xanthine to form the corresponding ribonucleotides GMP (guanosine 5'-monophosphate) and XMP (xanthosine 5'-monophosphate), with the release of PPi. To a lesser extent, also acts on hypoxanthine. This Haemophilus influenzae (strain 86-028NP) protein is Xanthine-guanine phosphoribosyltransferase 2.